Consider the following 359-residue polypeptide: Salicylate carboxymethyltransferase (359 aa).

Residue Y18 participates in S-adenosyl-L-methionine binding. Residues Y18, 21–25 (NSFIQ), and Q25 contribute to the substrate site. Residues G59, 59 to 60 (GC), 59 to 61 (GCS), N65, 96 to 99 (LNDL), D98, 129 to 131 (SFY), and 146 to 148 (SYS) each bind S-adenosyl-L-methionine. Substrate contacts are provided by residues 147–151 (YSLMW) and W151. Residues N162, D248, F250, and N251 each contribute to the Mg(2+) site. Residue Y255 participates in substrate binding.

This sequence belongs to the methyltransferase superfamily. SABATH family.

The enzyme catalyses salicylate + S-adenosyl-L-methionine = methyl salicylate + S-adenosyl-L-homocysteine. Functionally, catalyzes the methylation of the free carboxyl end of the plant hormone salicylic acid (SA). Converts SA to SA methyl ester (MSA). The volatile compound MSA is hypothesized to act as an airborne signal that triggers defense responses in uninfected plants. MSA is an important chemoattractant for moth pollinated flowering plants. This Clarkia breweri (Fairy fans) protein is Salicylate carboxymethyltransferase (SAMT).